A 633-amino-acid polypeptide reads, in one-letter code: Chaperone protein HtpG (633 aa).

Residues 1 to 344 (MSLQPQAETL…SNDLPLNISR (344 aa)) form an a; substrate-binding region. Residues 345–560 (ELLQSNEVIN…ENEMSGHLQR (216 aa)) form a b region. The c stretch occupies residues 561 to 633 (LLIQTGQDFM…KGLNELLLDS (73 aa)).

Belongs to the heat shock protein 90 family. In terms of assembly, homodimer.

The protein resides in the cytoplasm. Molecular chaperone. Has ATPase activity. The polypeptide is Chaperone protein HtpG (Coxiella burnetii (strain RSA 493 / Nine Mile phase I)).